The primary structure comprises 123 residues: Large ribosomal subunit protein bL12 (123 aa).

Belongs to the bacterial ribosomal protein bL12 family. As to quaternary structure, homodimer. Part of the ribosomal stalk of the 50S ribosomal subunit. Forms a multimeric L10(L12)X complex, where L10 forms an elongated spine to which 2 to 4 L12 dimers bind in a sequential fashion. Binds GTP-bound translation factors.

In terms of biological role, forms part of the ribosomal stalk which helps the ribosome interact with GTP-bound translation factors. Is thus essential for accurate translation. The sequence is that of Large ribosomal subunit protein bL12 from Acinetobacter baumannii (strain AB307-0294).